The primary structure comprises 289 residues: HTH-type transcriptional regulator HexR (289 aa).

In terms of domain architecture, HTH rpiR-type spans 1–77 (MNMLEKIQSQ…LHLAQSLANG (77 aa)). Positions 37–56 (IAAMALEANVSEPTVNRFCR) form a DNA-binding region, H-T-H motif. The region spanning 121–260 (AVDLLTQAKK…ATGFTLRRGA (140 aa)) is the SIS domain.

Functionally, represses the expression of the hex regulon (zwf, eda, glp and gap). The chain is HTH-type transcriptional regulator HexR (hexR) from Escherichia coli (strain K12).